The following is a 576-amino-acid chain: NADH-quinone oxidoreductase subunit C/D (576 aa).

The interval 1-176 (MAWISLEKAK…NLEGLFNYDR (176 aa)) is NADH dehydrogenase I subunit C. The segment at 200–576 (SQIVLNWGPL…IDPVVGETDR (377 aa)) is NADH dehydrogenase I subunit D.

It in the N-terminal section; belongs to the complex I 30 kDa subunit family. The protein in the C-terminal section; belongs to the complex I 49 kDa subunit family. As to quaternary structure, NDH-1 is composed of 13 different subunits. Subunits NuoB, CD, E, F, and G constitute the peripheral sector of the complex.

Its subcellular location is the cell inner membrane. The enzyme catalyses a quinone + NADH + 5 H(+)(in) = a quinol + NAD(+) + 4 H(+)(out). Its function is as follows. NDH-1 shuttles electrons from NADH, via FMN and iron-sulfur (Fe-S) centers, to quinones in the respiratory chain. The immediate electron acceptor for the enzyme in this species is believed to be ubiquinone. Couples the redox reaction to proton translocation (for every two electrons transferred, four hydrogen ions are translocated across the cytoplasmic membrane), and thus conserves the redox energy in a proton gradient. This is NADH-quinone oxidoreductase subunit C/D from Sulfurihydrogenibium sp. (strain YO3AOP1).